A 194-amino-acid chain; its full sequence is Large ribosomal subunit protein bL25 (194 aa).

Belongs to the bacterial ribosomal protein bL25 family. CTC subfamily. Part of the 50S ribosomal subunit; part of the 5S rRNA/L5/L18/L25 subcomplex. Contacts the 5S rRNA. Binds to the 5S rRNA independently of L5 and L18.

Its function is as follows. This is one of the proteins that binds to the 5S RNA in the ribosome where it forms part of the central protuberance. The protein is Large ribosomal subunit protein bL25 of Neorickettsia sennetsu (strain ATCC VR-367 / Miyayama) (Ehrlichia sennetsu).